Consider the following 181-residue polypeptide: MLQENFVSCSKEREVQLAVLSEFIHIPTFIYTALNLVILYFILKRLLFKPVWEFMENRKNSIAESMEKAEKGKAEALELKNKYESELNEAYAKAQKILKEAEEKAKQEYERIIRDAKNEAEALKLKAKEEIEREKNEALKEIRNEVVSLALEAASKVLEANMDTEENRKLVNRFIDEQGVA.

Residues 23–43 form a helical membrane-spanning segment; the sequence is FIHIPTFIYTALNLVILYFIL.

The protein belongs to the ATPase B chain family. In terms of assembly, F-type ATPases have 2 components, F(1) - the catalytic core - and F(0) - the membrane proton channel. F(1) has five subunits: alpha(3), beta(3), gamma(1), delta(1), epsilon(1). F(0) has three main subunits: a(1), b(2) and c(10-14). The alpha and beta chains form an alternating ring which encloses part of the gamma chain. F(1) is attached to F(0) by a central stalk formed by the gamma and epsilon chains, while a peripheral stalk is formed by the delta and b chains.

It is found in the cell membrane. Functionally, f(1)F(0) ATP synthase produces ATP from ADP in the presence of a proton or sodium gradient. F-type ATPases consist of two structural domains, F(1) containing the extramembraneous catalytic core and F(0) containing the membrane proton channel, linked together by a central stalk and a peripheral stalk. During catalysis, ATP synthesis in the catalytic domain of F(1) is coupled via a rotary mechanism of the central stalk subunits to proton translocation. Its function is as follows. Component of the F(0) channel, it forms part of the peripheral stalk, linking F(1) to F(0). The sequence is that of ATP synthase subunit b from Acetivibrio thermocellus (strain ATCC 27405 / DSM 1237 / JCM 9322 / NBRC 103400 / NCIMB 10682 / NRRL B-4536 / VPI 7372) (Clostridium thermocellum).